Here is a 130-residue protein sequence, read N- to C-terminus: Protein BLT4 (130 aa).

An N-terminal signal peptide occupies residues 1 to 25; the sequence is MARTAATKLALVPLVAAMLLVAADA. The disordered stretch occupies residues 80-130; the sequence is VPARTTPAGPQASPPGAASASPTRSAPVSTALRSTDRTRAPHISSDRRLVG. The span at 84–110 shows a compositional bias: low complexity; sequence TTPAGPQASPPGAASASPTRSAPVSTA. Positions 113–130 are enriched in basic and acidic residues; the sequence is STDRTRAPHISSDRRLVG.

This sequence belongs to the plant LTP family. As to expression, shoot meristem.

In terms of biological role, possible dehydrative stress responsive protein. Not shown to have lipid transfer activity. The polypeptide is Protein BLT4 (BLT4) (Hordeum vulgare (Barley)).